The primary structure comprises 68 residues: Large ribosomal subunit protein uL29 (68 aa).

The protein belongs to the universal ribosomal protein uL29 family.

This chain is Large ribosomal subunit protein uL29, found in Streptococcus uberis (strain ATCC BAA-854 / 0140J).